A 140-amino-acid polypeptide reads, in one-letter code: Ribosome-binding factor A (140 aa).

Positions 1–23 (MLRDRNRSGVRGGAEGPSQRQRR) are disordered.

The protein belongs to the RbfA family. Monomer. Binds 30S ribosomal subunits, but not 50S ribosomal subunits or 70S ribosomes.

Its subcellular location is the cytoplasm. Its function is as follows. One of several proteins that assist in the late maturation steps of the functional core of the 30S ribosomal subunit. Associates with free 30S ribosomal subunits (but not with 30S subunits that are part of 70S ribosomes or polysomes). Required for efficient processing of 16S rRNA. May interact with the 5'-terminal helix region of 16S rRNA. This Acidiphilium cryptum (strain JF-5) protein is Ribosome-binding factor A.